We begin with the raw amino-acid sequence, 87 residues long: MMDMFFAYLLVASATPLFIWLDNKKVALSAIPPIILMWVFFFFYATESLSPLGHTLMIILFAVNVIVAHIAAFIIYGLPYLRRKRSS.

The next 3 helical transmembrane spans lie at 1–21 (MMDM…FIWL), 26–46 (VALS…FYAT), and 56–76 (LMII…FIIY).

This sequence belongs to the YwcE family.

The protein localises to the cell membrane. The protein resides in the spore membrane. It localises to the spore outer membrane. Its function is as follows. Required for proper spore morphogenesis. Important for spore germination. The sequence is that of Spore morphogenesis and germination protein YwcE (ywcE) from Bacillus subtilis (strain 168).